The primary structure comprises 231 residues: Transcriptional regulator NRG1 (231 aa).

S163 bears the Phosphoserine mark. C2H2-type zinc fingers lie at residues 174–196 (YICK…NRIH) and 202–226 (HCCP…YRTH).

The protein resides in the nucleus. In terms of biological role, transcriptional repressor involved in regulation of glucose repression. Binds to UAS-1 in the STA1 promoter. The protein is Transcriptional regulator NRG1 (NRG1) of Saccharomyces cerevisiae (strain ATCC 204508 / S288c) (Baker's yeast).